We begin with the raw amino-acid sequence, 307 residues long: Fructokinase (307 aa).

This sequence belongs to the carbohydrate kinase PfkB family.

The catalysed reaction is D-fructose + ATP = D-fructose 6-phosphate + ADP + H(+). This is Fructokinase (scrK) from Vibrio alginolyticus.